The chain runs to 283 residues: Foldase protein PrsA 3 (283 aa).

The N-terminal stretch at 1–21 (MKKKKIFIGTIISCVMLALSA) is a signal peptide. Residue C22 is the site of N-palmitoyl cysteine attachment. C22 is lipidated: S-diacylglycerol cysteine. One can recognise a PpiC domain in the interval 132–222 (KPEMKVSHIL…YGYHIIKVTD (91 aa)).

Belongs to the PrsA family.

The protein resides in the cell membrane. The enzyme catalyses [protein]-peptidylproline (omega=180) = [protein]-peptidylproline (omega=0). Functionally, plays a major role in protein secretion by helping the post-translocational extracellular folding of several secreted proteins. In Bacillus cereus (strain ATCC 14579 / DSM 31 / CCUG 7414 / JCM 2152 / NBRC 15305 / NCIMB 9373 / NCTC 2599 / NRRL B-3711), this protein is Foldase protein PrsA 3 (prsA3).